A 538-amino-acid polypeptide reads, in one-letter code: ATP synthase subunit alpha, mitochondrial (538 aa).

Gly-197 to Thr-204 contributes to the ATP binding site. Residues Phe-228–Leu-248 form an essential and sufficient for enterobactin binding region.

It belongs to the ATPase alpha/beta chains family. In terms of assembly, subunit of the F-type ATPase which has 2 components, CF(1) - the catalytic core - and CF(0) - the membrane proton channel. In terms of tissue distribution, ubiquitous (at protein level).

The protein localises to the mitochondrion. It is found in the mitochondrion inner membrane. Mitochondrial membrane ATP synthase (F(1)F(0) ATP synthase or Complex V) produces ATP from ADP in the presence of a proton gradient across the membrane which is generated by electron transport complexes of the respiratory chain. F-type ATPases consist of two structural domains, F(1) - containing the extramembraneous catalytic core, and F(0) - containing the membrane proton channel, linked together by a central stalk and a peripheral stalk. During catalysis, ATP synthesis in the catalytic domain of F(1) is coupled via a rotary mechanism of the central stalk subunits to proton translocation. Subunits alpha and beta form the catalytic core in F(1). Rotation of the central stalk against the surrounding subunits leads to hydrolysis of ATP in three separate catalytic sites on the beta subunits. Subunit alpha does not bear the catalytic high-affinity ATP-binding sites. Binds the bacterial siderophore enterobactin and is required for the assimilation of enterobactin-bound iron from non-pathogenic bacteria. Promotes mitochondrial accumulation of enterobactin-derived iron ions. This Caenorhabditis elegans protein is ATP synthase subunit alpha, mitochondrial.